A 90-amino-acid polypeptide reads, in one-letter code: Probable Fe(2+)-trafficking protein (90 aa).

The protein belongs to the Fe(2+)-trafficking protein family.

Functionally, could be a mediator in iron transactions between iron acquisition and iron-requiring processes, such as synthesis and/or repair of Fe-S clusters in biosynthetic enzymes. This Actinobacillus succinogenes (strain ATCC 55618 / DSM 22257 / CCUG 43843 / 130Z) protein is Probable Fe(2+)-trafficking protein.